The following is a 388-amino-acid chain: Succinate--CoA ligase [ADP-forming] subunit beta (388 aa).

The 236-residue stretch at 9–244 (KQLFAEYGLP…PSQDDAREAH (236 aa)) folds into the ATP-grasp domain. ATP is bound by residues Lys46, 53–55 (GRG), Glu99, Thr102, and Glu107. Asn199 and Asp213 together coordinate Mg(2+). Substrate-binding positions include Asn264 and 321–323 (GIV).

The protein belongs to the succinate/malate CoA ligase beta subunit family. Heterotetramer of two alpha and two beta subunits. Mg(2+) is required as a cofactor.

The enzyme catalyses succinate + ATP + CoA = succinyl-CoA + ADP + phosphate. It catalyses the reaction GTP + succinate + CoA = succinyl-CoA + GDP + phosphate. It participates in carbohydrate metabolism; tricarboxylic acid cycle; succinate from succinyl-CoA (ligase route): step 1/1. Succinyl-CoA synthetase functions in the citric acid cycle (TCA), coupling the hydrolysis of succinyl-CoA to the synthesis of either ATP or GTP and thus represents the only step of substrate-level phosphorylation in the TCA. The beta subunit provides nucleotide specificity of the enzyme and binds the substrate succinate, while the binding sites for coenzyme A and phosphate are found in the alpha subunit. In Pseudomonas putida (strain ATCC 700007 / DSM 6899 / JCM 31910 / BCRC 17059 / LMG 24140 / F1), this protein is Succinate--CoA ligase [ADP-forming] subunit beta.